The primary structure comprises 119 residues: Large ribosomal subunit protein uL22 (119 aa).

Belongs to the universal ribosomal protein uL22 family. As to quaternary structure, part of the 50S ribosomal subunit.

This protein binds specifically to 23S rRNA; its binding is stimulated by other ribosomal proteins, e.g. L4, L17, and L20. It is important during the early stages of 50S assembly. It makes multiple contacts with different domains of the 23S rRNA in the assembled 50S subunit and ribosome. Its function is as follows. The globular domain of the protein is located near the polypeptide exit tunnel on the outside of the subunit, while an extended beta-hairpin is found that lines the wall of the exit tunnel in the center of the 70S ribosome. The protein is Large ribosomal subunit protein uL22 of Chlorobaculum tepidum (strain ATCC 49652 / DSM 12025 / NBRC 103806 / TLS) (Chlorobium tepidum).